The chain runs to 117 residues: UPF0102 protein RSKD131_0118 (117 aa).

This sequence belongs to the UPF0102 family.

This is UPF0102 protein RSKD131_0118 from Cereibacter sphaeroides (strain KD131 / KCTC 12085) (Rhodobacter sphaeroides).